Consider the following 582-residue polypeptide: Semenogelin-2 (582 aa).

The first 23 residues, 1–23 (MKSIILFVLSLLLILEKQAAVMG), serve as a signal peptide directing secretion. The segment at 24–59 (QKGGSKGQLPSGSSQFPHGQKGQHYFGQKDQQHTKS) is disordered. The segment covering 31–40 (QLPSGSSQFP) has biased composition (polar residues). Repeat copies occupy residues 70–129 (HVDI…IVIH), 141–200 (NPSQ…QTEE), and 201–260 (LVVN…QDEL). Positions 70–559 (HVDINDHDWT…SSESHNIVIT (490 aa)) are repeat-rich region. Disordered regions lie at residues 132 to 160 (GGQAHHGTQNPSQDQGNSPSGKGLSSQCS), 173 to 194 (KEQASASGAQKGRTQGGSQSSY), 228 to 248 (EEHSSKLQTSLHPAHQDRLQH), and 269 to 582 (QTKN…PIST). Polar residues-rich tracts occupy residues 137 to 160 (HGTQNPSQDQGNSPSGKGLSSQCS) and 174 to 194 (EQASASGAQKGRTQGGSQSSY). The interval 261–500 (LVYNKNQHQT…QSSISFQIEK (240 aa)) is 4 X 60 AA tandem repeats, type I. N272 carries an N-linked (GlcNAc...) asparagine glycan. Residues 292-310 (RTEERQLHHGEKSVQKDVS) are compositionally biased toward basic and acidic residues. The span at 325-334 (KSQNQVTIHS) shows a compositional bias: polar residues. Residues 335–345 (QDQEHGHKENK) show a composition bias toward basic and acidic residues. Residues 372–397 (GSISIQTEEQIHGKSQNQVRIPSQAQ) show a composition bias toward polar residues. Positions 413 to 426 (TEERRLNSGEKDVQ) are enriched in basic and acidic residues. The segment covering 445–455 (KSQNQVTIPSQ) has biased composition (polar residues). A compositionally biased stretch (basic and acidic residues) spans 456–465 (DQEHGHKENK). Composition is skewed to polar residues over residues 482–496 (GKSTQKDVSQSSISF) and 506–532 (SQIQTPNPNQDQWSGQNAKGKSGQSAD). A 3-2 repeat occupies 501–559 (LVEGKSQIQTPNPNQDQWSGQNAKGKSGQSADSKQDLLSHEQKGRYKQESSESHNIVIT). Basic and acidic residues-rich tracts occupy residues 533–552 (SKQDLLSHEQKGRYKQESSE) and 559–582 (TEHEVAQDDHLTQQYNEDRNPIST).

The protein belongs to the semenogelin family. In terms of assembly, interacts with SERPINA5. Post-translationally, semenogelin-2 is thought to form both the 71 kDa polypeptide and, in its glycosylated form, the 76 kDa polypeptide. In terms of tissue distribution, seminal vesicles, and to a much lesser extent, epididymis.

Its subcellular location is the secreted. Participates in the formation of a gel matrix (sperm coagulum) entrapping the accessory gland secretions and ejaculated spermatozoa. The sequence is that of Semenogelin-2 (SEMG2) from Homo sapiens (Human).